The chain runs to 451 residues: Interferon regulatory factor 4 (451 aa).

Positions 21–129 (NGKLRQWLID…DPYKVYRIVP (109 aa)) form a DNA-binding region, IRF tryptophan pentad repeat. A phosphoserine; by ROCK2 mark is found at serine 447 and serine 448.

This sequence belongs to the IRF family. In terms of assembly, interacts with the BATF-JUNB heterodimer. Interacts with BATF (via bZIP domain); the interaction is direct. Interacts with SPIB. Interacts with DEF6. Directly interacts with NLRP3 in the nucleus of Th2 cells; this interaction enhances IRF4 ability to bind to the IL4 promoter and is required for optimal IRF4-dependent IL4 transcription. Interacts with SPI1. Post-translationally, phosphorylation by ROCK2 regulates IL-17 and IL-21 production. Lymphoid cells.

Its subcellular location is the nucleus. It localises to the cytoplasm. Its function is as follows. Transcriptional activator. Binds to the interferon-stimulated response element (ISRE) of the MHC class I promoter. Binds the immunoglobulin lambda light chain enhancer, together with PU.1. Probably plays a role in ISRE-targeted signal transduction mechanisms specific to lymphoid cells. Involved in CD8(+) dendritic cell differentiation by forming a complex with the BATF-JUNB heterodimer in immune cells, leading to recognition of AICE sequence (5'-TGAnTCA/GAAA-3'), an immune-specific regulatory element, followed by cooperative binding of BATF and IRF4 and activation of genes. The protein is Interferon regulatory factor 4 of Homo sapiens (Human).